We begin with the raw amino-acid sequence, 364 residues long: tRNA 2-selenouridine synthase (364 aa).

The Rhodanese domain occupies 14-137 (LIADTPIIDV…LRQTTIQATI (124 aa)). Residue C97 is the S-selanylcysteine intermediate of the active site.

It belongs to the SelU family. Monomer.

It catalyses the reaction 5-methylaminomethyl-2-thiouridine(34) in tRNA + selenophosphate + (2E)-geranyl diphosphate + H2O + H(+) = 5-methylaminomethyl-2-selenouridine(34) in tRNA + (2E)-thiogeraniol + phosphate + diphosphate. It carries out the reaction 5-methylaminomethyl-2-thiouridine(34) in tRNA + (2E)-geranyl diphosphate = 5-methylaminomethyl-S-(2E)-geranyl-thiouridine(34) in tRNA + diphosphate. The enzyme catalyses 5-methylaminomethyl-S-(2E)-geranyl-thiouridine(34) in tRNA + selenophosphate + H(+) = 5-methylaminomethyl-2-(Se-phospho)selenouridine(34) in tRNA + (2E)-thiogeraniol. The catalysed reaction is 5-methylaminomethyl-2-(Se-phospho)selenouridine(34) in tRNA + H2O = 5-methylaminomethyl-2-selenouridine(34) in tRNA + phosphate. Functionally, involved in the post-transcriptional modification of the uridine at the wobble position (U34) of tRNA(Lys), tRNA(Glu) and tRNA(Gln). Catalyzes the conversion of 2-thiouridine (S2U-RNA) to 2-selenouridine (Se2U-RNA). Acts in a two-step process involving geranylation of 2-thiouridine (S2U) to S-geranyl-2-thiouridine (geS2U) and subsequent selenation of the latter derivative to 2-selenouridine (Se2U) in the tRNA chain. In Escherichia coli O8 (strain IAI1), this protein is tRNA 2-selenouridine synthase.